Reading from the N-terminus, the 217-residue chain is D-methionine transport system permease protein MetI (217 aa).

The Periplasmic segment spans residues Met1 to Met19. The 192-residue stretch at Val13–Gln204 folds into the ABC transmembrane type-1 domain. A helical membrane pass occupies residues Thr20 to Val40. Over Thr41–Ser57 the chain is Cytoplasmic. A helical transmembrane segment spans residues Ala58–Phe78. At Thr79 to Arg80 the chain is on the periplasmic side. A helical transmembrane segment spans residues Val81–Ala101. The Cytoplasmic portion of the chain corresponds to Pro102–Thr151. Residues Ile152–Leu172 traverse the membrane as a helical segment. At Gly173 to Asn185 the chain is on the periplasmic side. The chain crosses the membrane as a helical span at residues Ala186–Ala206. Residues Gly207 to Lys217 are Cytoplasmic-facing.

Belongs to the binding-protein-dependent transport system permease family. CysTW subfamily.

The protein localises to the cell inner membrane. Part of the binding-protein-dependent transport system for D-methionine and the toxic methionine analog alpha-methyl-methionine. Probably responsible for the translocation of the substrate across the membrane. Its function is as follows. (Microbial infection) Probably transports the toxic C-terminal region of CdiA from E.coli strain MHI813 across the inner membrane to the cytoplasm, where CdiA has a toxic effect. Toxin transport is strain-specific, mutations in this gene do not confer resistance to several other tested CdiA toxins. The sequence is that of D-methionine transport system permease protein MetI (metI) from Escherichia coli (strain K12).